We begin with the raw amino-acid sequence, 343 residues long: Transmembrane protein 120A (343 aa).

Over 1 to 132 (MQPPPPGPLG…KQAKFAYKDE (132 aa)) the chain is Cytoplasmic. A CoA-binding site is contributed by Lys130. The helical transmembrane segment at 133 to 152 (YEKFKLYLTIILILISFTCR) threads the bilayer. At 153–158 (FLLNSR) the chain is on the extracellular side. A helical membrane pass occupies residues 159–177 (VTDAAFNFLLVWYYCTLTI). Topologically, residues 178 to 190 (RESILINNGSRIK) are cytoplasmic. CoA-binding residues include Ser187 and Arg188. The helical transmembrane segment at 191-209 (GWWVFHHYVSTFLSGVMLT) threads the bilayer. At 210-218 (WPDGLMYQK) the chain is on the extracellular side. The helical transmembrane segment at 219–240 (FRNQFLSFSMYQSFVQFLQYYY) threads the bilayer. CoA contacts are provided by Gln237, Tyr240, Gln241, and His283. The Cytoplasmic portion of the chain corresponds to 241–270 (QSGCLYRLRALGERHTMDLTVEGFQSWMWR). Residues 271 to 294 (GLTFLLPFLFFGHFWQLFNALTLF) traverse the membrane as a helical segment. Residues 295-304 (NLAQDPQCKE) lie on the Extracellular side of the membrane. Residues 305–330 (WQVLMCGFPFLLLFLGNFFTTLRVVH) form a helical membrane-spanning segment. Residues 331–343 (HKFHSQRHGSKKD) lie on the Cytoplasmic side of the membrane. Lys332 contributes to the CoA binding site.

The protein belongs to the TMEM120 family. As to quaternary structure, homodimer. Forms heterooligomer with TMEM120B. Interacts with PKD2; TMEM120A inhibits PKD2 channel activity through the physical association of PKD2 with TMEM120A. Interacts (via C-terminal domain) with STING1; regulates the trafficking of STING1 from the ER to the ER-Golgi intermediate compartment to elicit antiviral effects. As to expression, expressed in nociceptors.

The protein localises to the cell membrane. The protein resides in the nucleus inner membrane. Its subcellular location is the endoplasmic reticulum. In terms of biological role, multifunctional protein involved in mechanosensation, and plays an essential role in lipid metabolism and adipocyte differentiation. May function as a potential ion channel involved in sensing mechanical stimuli. Mediates the mechanosensitivity of the PKD2-TMEM120A channel complex through direct physical interaction. TMEM120A seems to affect mechanosensation by inhibiting PIEZO2 channels, possibly by altering cellular lipid content. TMEM120A is structurally similar to a lipid-modifying enzyme, ELOVL7, and contains a bound coenzyme A molecule, which suggests it might function as an enzyme in lipid metabolism. Additionnaly, implicated in innate immune response against Zika virus. Acts as a key activator of the antiviral signaling involving STING1. This is Transmembrane protein 120A from Homo sapiens (Human).